The sequence spans 265 residues: Mlc titration factor A (265 aa).

Zn(2+)-binding residues include His-111, His-148, His-152, and Glu-211.

Belongs to the MtfA family. Interacts with Mlc. Zn(2+) serves as cofactor.

The protein localises to the cytoplasm. Functionally, involved in the modulation of the activity of the glucose-phosphotransferase system (glucose-PTS). Interacts with the transcriptional repressor Mlc, preventing its interaction with DNA and leading to the modulation of expression of genes regulated by Mlc, including ptsG, which encodes the PTS system glucose-specific EIICB component. Its function is as follows. Shows zinc-dependent metallopeptidase activity. In Salmonella schwarzengrund (strain CVM19633), this protein is Mlc titration factor A.